Reading from the N-terminus, the 497-residue chain is UPF0371 protein cu0538 (497 aa).

The protein belongs to the UPF0371 family.

The chain is UPF0371 protein cu0538 from Corynebacterium urealyticum (strain ATCC 43042 / DSM 7109).